A 215-amino-acid polypeptide reads, in one-letter code: 3-isopropylmalate dehydratase small subunit (215 aa).

It belongs to the LeuD family. LeuD type 1 subfamily. As to quaternary structure, heterodimer of LeuC and LeuD.

It catalyses the reaction (2R,3S)-3-isopropylmalate = (2S)-2-isopropylmalate. The protein operates within amino-acid biosynthesis; L-leucine biosynthesis; L-leucine from 3-methyl-2-oxobutanoate: step 2/4. Its function is as follows. Catalyzes the isomerization between 2-isopropylmalate and 3-isopropylmalate, via the formation of 2-isopropylmaleate. The sequence is that of 3-isopropylmalate dehydratase small subunit from Polynucleobacter necessarius subsp. necessarius (strain STIR1).